Reading from the N-terminus, the 715-residue chain is Polyribonucleotide nucleotidyltransferase (715 aa).

The Mg(2+) site is built by aspartate 488 and aspartate 494. The KH domain maps to 555–614 (PKIETIKIPVDKIREVIGSGGKVIREIVEKTGAKIDIGEDGTIKIAAAEQTKIDAAKEWI). The 69-residue stretch at 624–692 (GQIYTGKVVK…DRGKTRLSMK (69 aa)) folds into the S1 motif domain. Residues 692 to 715 (KVVDQETGEDLSKSNEKAEEPADA) form a disordered region. Over residues 701 to 715 (DLSKSNEKAEEPADA) the composition is skewed to basic and acidic residues.

It belongs to the polyribonucleotide nucleotidyltransferase family. Mg(2+) serves as cofactor.

The protein resides in the cytoplasm. The enzyme catalyses RNA(n+1) + phosphate = RNA(n) + a ribonucleoside 5'-diphosphate. Its function is as follows. Involved in mRNA degradation. Catalyzes the phosphorolysis of single-stranded polyribonucleotides processively in the 3'- to 5'-direction. The polypeptide is Polyribonucleotide nucleotidyltransferase (Phenylobacterium zucineum (strain HLK1)).